The primary structure comprises 510 residues: Xylose import ATP-binding protein XylG (510 aa).

ABC transporter domains are found at residues 5 to 242 and 259 to 505; these read LEMK…VGRE and LRVE…LRSE. Residue 37–44 participates in ATP binding; it reads GENGSGKS.

The protein belongs to the ABC transporter superfamily. Xylose importer (TC 3.A.1.2.4) family. In terms of assembly, the complex is composed of two ATP-binding proteins (XylG), two transmembrane proteins (XylH) and a solute-binding protein (XylF).

It localises to the cell inner membrane. It carries out the reaction D-xylose(out) + ATP + H2O = D-xylose(in) + ADP + phosphate + H(+). Functionally, part of the ABC transporter complex XylFGH involved in xylose import. Responsible for energy coupling to the transport system. The chain is Xylose import ATP-binding protein XylG from Yersinia pestis.